The chain runs to 108 residues: UPF0060 membrane protein KPN78578_15550 (108 aa).

4 helical membrane passes run 6 to 26 (LLFF…WLWL), 29 to 49 (GATP…VWLL), 61 to 81 (AAYG…VDGV), and 86 to 106 (YDWA…AGWG).

The protein belongs to the UPF0060 family.

The protein resides in the cell inner membrane. The sequence is that of UPF0060 membrane protein KPN78578_15550 from Klebsiella pneumoniae subsp. pneumoniae (strain ATCC 700721 / MGH 78578).